The chain runs to 461 residues: Probable Xaa-Pro aminopeptidase PEPP (461 aa).

Mn(2+) is bound by residues Asp257, Asp268, Glu391, and Glu431.

The protein belongs to the peptidase M24B family. Mn(2+) is required as a cofactor.

The enzyme catalyses Release of any N-terminal amino acid, including proline, that is linked to proline, even from a dipeptide or tripeptide.. Catalyzes the removal of a penultimate prolyl residue from the N-termini of peptides. This chain is Probable Xaa-Pro aminopeptidase PEPP (PEPP), found in Colletotrichum graminicola (strain M1.001 / M2 / FGSC 10212) (Maize anthracnose fungus).